A 615-amino-acid polypeptide reads, in one-letter code: Probable methylmalonyl-CoA mutase small subunit (615 aa).

The protein belongs to the methylmalonyl-CoA mutase family. As to quaternary structure, heterodimer of an alpha and a beta chain. Adenosylcob(III)alamin is required as a cofactor.

It carries out the reaction (R)-methylmalonyl-CoA = succinyl-CoA. The protein operates within metabolic intermediate metabolism; propanoyl-CoA degradation; succinyl-CoA from propanoyl-CoA: step 3/3. Its function is as follows. Catalyzes the isomerization of succinyl-CoA to methylmalonyl-CoA during synthesis of propionate from tricarboxylic acid-cycle intermediates. This is Probable methylmalonyl-CoA mutase small subunit (mutA) from Mycobacterium bovis (strain ATCC BAA-935 / AF2122/97).